Here is a 359-residue protein sequence, read N- to C-terminus: Chondroadherin (359 aa).

The signal sequence occupies residues 1–22; it reads MVRPMLLLSLGLLAGLLPALAA. Cysteine 23 and cysteine 38 are oxidised to a cystine. One can recognise an LRRNT domain in the interval 23 to 52; the sequence is CPQNCHCHSDLQHVICDKVGLQKIPKVSEK. 9 LRR repeats span residues 76–97, 100–121, 124–145, 148–169, 172–193, 196–217, 220–241, 245–266, and 269–290; these read NLVS…AFRG, QLIY…AFDD, ELTY…LLSP, NLFI…AFQG, DLRW…ALDD, NLAK…ALSK, VVEE…AFQS, YLET…AFLG, and TLKH…FPFD. O-linked (GalNAc...) serine glycosylation occurs at serine 144. The 49-residue stretch at 300–348 folds into the LRRCT domain; that stretch reads NPWKCTCQLRGLRRWLEAKASRPDATCASPAKFKGQHIRDTDAFRSCKF. Intrachain disulfides connect cysteine 304–cysteine 346 and cysteine 306–cysteine 326.

Belongs to the small leucine-rich proteoglycan (SLRP) family. SLRP class IV subfamily. In terms of assembly, mostly monomeric. Interacts with collagen type II. In terms of tissue distribution, present in chondrocytes at all ages.

The protein localises to the secreted. The protein resides in the extracellular space. It is found in the extracellular matrix. Promotes attachment of chondrocytes, fibroblasts, and osteoblasts. This binding is mediated (at least for chondrocytes and fibroblasts) by the integrin alpha(2)beta(1). May play an important role in the regulation of chondrocyte growth and proliferation. This is Chondroadherin (CHAD) from Homo sapiens (Human).